The following is a 22-amino-acid chain: NADH dehydrogenase [ubiquinone] 1 alpha subcomplex subunit 9 (22 aa).

The interval 1 to 22 is disordered; sequence ASNLATGGAGPLIXKGTGGRSS.

Belongs to the complex I NDUFA9 subunit family. As to quaternary structure, complex I is composed of about 45 different subunits. FAD serves as cofactor.

The protein resides in the mitochondrion matrix. In terms of biological role, accessory subunit of the mitochondrial membrane respiratory chain NADH dehydrogenase (Complex I), that is believed not to be involved in catalysis. Complex I functions in the transfer of electrons from NADH to the respiratory chain. The immediate electron acceptor for the enzyme is believed to be ubiquinone. This chain is NADH dehydrogenase [ubiquinone] 1 alpha subcomplex subunit 9, found in Solanum tuberosum (Potato).